The chain runs to 207 residues: Ribonuclease HII (207 aa).

The 190-residue stretch at 12-201 folds into the RNase H type-2 domain; that stretch reads DLVAGVDEVG…VRAAWEVREG (190 aa). A divalent metal cation-binding residues include Asp18, Glu19, and Asp110.

Belongs to the RNase HII family. Mn(2+) is required as a cofactor. It depends on Mg(2+) as a cofactor.

Its subcellular location is the cytoplasm. The enzyme catalyses Endonucleolytic cleavage to 5'-phosphomonoester.. Functionally, endonuclease that specifically degrades the RNA of RNA-DNA hybrids. The polypeptide is Ribonuclease HII (Pseudomonas putida (strain ATCC 700007 / DSM 6899 / JCM 31910 / BCRC 17059 / LMG 24140 / F1)).